We begin with the raw amino-acid sequence, 134 residues long: Large ribosomal subunit protein uL16c (134 aa).

This sequence belongs to the universal ribosomal protein uL16 family. As to quaternary structure, part of the 50S ribosomal subunit.

Its subcellular location is the plastid. The protein resides in the chloroplast. This Solanum lycopersicum (Tomato) protein is Large ribosomal subunit protein uL16c.